Reading from the N-terminus, the 356-residue chain is Fe(3+) ions import ATP-binding protein FbpC 2 (356 aa).

The ABC transporter domain occupies 12–246; the sequence is LTVKNLNKFF…PNHLETAKFM (235 aa). ATP is bound at residue 44–51; the sequence is GSSGCGKT.

It belongs to the ABC transporter superfamily. Fe(3+) ion importer (TC 3.A.1.10) family. In terms of assembly, the complex is composed of two ATP-binding proteins (FbpC), two transmembrane proteins (FbpB) and a solute-binding protein (FbpA).

It localises to the cell inner membrane. The enzyme catalyses Fe(3+)(out) + ATP + H2O = Fe(3+)(in) + ADP + phosphate + H(+). In terms of biological role, part of the ABC transporter complex FbpABC involved in Fe(3+) ions import. Responsible for energy coupling to the transport system. This chain is Fe(3+) ions import ATP-binding protein FbpC 2, found in Haemophilus influenzae (strain ATCC 51907 / DSM 11121 / KW20 / Rd).